Here is a 345-residue protein sequence, read N- to C-terminus: NADH-ubiquinone oxidoreductase chain 2 (345 aa).

A run of 9 helical transmembrane segments spans residues 1-21 (MNPI…ILAM), 25-45 (HWVY…PIIS), 60-80 (FLIQ…NAYL), 113-133 (FWLP…IATW), 148-168 (LIPT…GGLG), 191-211 (VIII…YMIF), 239-259 (IITS…PMSG), 274-294 (HLTP…MFYL), and 324-344 (SSLS…PLLI).

This sequence belongs to the complex I subunit 2 family.

The protein localises to the mitochondrion inner membrane. The catalysed reaction is a ubiquinone + NADH + 5 H(+)(in) = a ubiquinol + NAD(+) + 4 H(+)(out). Core subunit of the mitochondrial membrane respiratory chain NADH dehydrogenase (Complex I) that is believed to belong to the minimal assembly required for catalysis. Complex I functions in the transfer of electrons from NADH to the respiratory chain. The immediate electron acceptor for the enzyme is believed to be ubiquinone. The chain is NADH-ubiquinone oxidoreductase chain 2 (MT-ND2) from Varanus baritji (Black-spotted ridge-tailed monitor).